Here is a 725-residue protein sequence, read N- to C-terminus: N-alpha-acetyltransferase 35, NatC auxiliary subunit (725 aa).

The residue at position 187 (S187) is a Phosphoserine. Residues 548 to 573 are disordered; it reads ERIMEEQQKGRSSKKTKKKKKVRPLS. A compositionally biased stretch (basic residues) spans 558–571; it reads RSSKKTKKKKKVRP.

This sequence belongs to the MAK10 family. As to quaternary structure, component of the N-terminal acetyltransferase C (NatC) complex, which is composed of NAA35, NAA38 and NAA30.

The protein localises to the cytoplasm. Functionally, auxillary component of the N-terminal acetyltransferase C (NatC) complex which catalyzes acetylation of N-terminal methionine residues. N-terminal acetylation protects proteins from ubiquitination and degradation by the N-end rule pathway. Involved in regulation of apoptosis and proliferation of smooth muscle cells. This Homo sapiens (Human) protein is N-alpha-acetyltransferase 35, NatC auxiliary subunit (NAA35).